The sequence spans 345 residues: Phosphoribosylformylglycinamidine cyclo-ligase (345 aa).

Belongs to the AIR synthase family.

It localises to the cytoplasm. The catalysed reaction is 2-formamido-N(1)-(5-O-phospho-beta-D-ribosyl)acetamidine + ATP = 5-amino-1-(5-phospho-beta-D-ribosyl)imidazole + ADP + phosphate + H(+). Its pathway is purine metabolism; IMP biosynthesis via de novo pathway; 5-amino-1-(5-phospho-D-ribosyl)imidazole from N(2)-formyl-N(1)-(5-phospho-D-ribosyl)glycinamide: step 2/2. This is Phosphoribosylformylglycinamidine cyclo-ligase from Shewanella frigidimarina (strain NCIMB 400).